Here is a 1207-residue protein sequence, read N- to C-terminus: RNA-binding protein 20 (1207 aa).

The disordered stretch occupies residues 1 to 58 (MVLAAAMSQDADPSGPEQPDRDACIVPGVQGPPAPQGQQGMQPLPPPLPPPPQPQSSL). Positions 43–54 (PLPPPLPPPPQP) are enriched in pro residues. A U1-type zinc finger spans residues 412–446 (HLPHICSICDKKVFDLKDWELHVKGKLHAQKCLLF). The 76-residue stretch at 521–596 (RVVHICNLPE…EKLLIRMSTR (76 aa)) folds into the RRM domain. A compositionally biased stretch (basic and acidic residues) spans 625-637 (LREADRYGPERPR). 3 disordered regions span residues 625–686 (LREA…NGED), 722–896 (EKYL…MEEL), and 951–1110 (QGET…AELK). Residues 631–650 (YGPERPRSRSPMSRSLSPRS) form an RS region. 5 positions are modified to phosphoserine: Ser-638, Ser-640, Ser-643, Ser-645, and Ser-652. Residues 639–650 (RSPMSRSLSPRS) show a composition bias toward low complexity. Residues 668-686 (YAWRDEDRETVPRRENGED) show a composition bias toward basic and acidic residues. Phosphoserine is present on Ser-729. 3 stretches are compositionally biased toward basic and acidic residues: residues 740–759 (KGRE…DKHP), 772–789 (RKEE…PEDS), and 796–836 (EPKV…RGAE). Ser-789 carries the post-translational modification Phosphoserine. Positions 839–848 (AGTEEQEGME) are enriched in acidic residues. Phosphoserine is present on residues Ser-853 and Ser-864. Over residues 853 to 863 (SVGTQQEGTES) the composition is skewed to polar residues. Residues 867–876 (ENTRTKKGQD) are compositionally biased toward basic and acidic residues. Ser-879, Ser-881, and Ser-963 each carry phosphoserine. The segment covering 970 to 979 (VPSTSTSCPN) has biased composition (polar residues). The residue at position 999 (Ser-999) is a Phosphoserine. Residues 1011–1022 (YEKEARGAEGSD) are compositionally biased toward basic and acidic residues. 7 positions are modified to phosphoserine: Ser-1034, Ser-1046, Ser-1057, Ser-1066, Ser-1078, Ser-1096, and Ser-1101. A compositionally biased stretch (basic and acidic residues) spans 1050–1072 (DDCKARGSPEDGPHEVSPLEEKA). A compositionally biased stretch (polar residues) spans 1073–1102 (SPTTESDLQSQACQENSRYTETRSLNSRSP). Residues 1141-1172 (FYCKLCGLFYTSEEAAKVSHCRSTVHYRNLQK) form a Matrin-type zinc finger. The tract at residues 1181-1207 (GLKETEGVDSPSPERSGIGPHLERKKL) is disordered. Residues Ser-1190 and Ser-1192 each carry the phosphoserine modification.

In terms of assembly, associates with components of the U1 and U2 U1 small nuclear ribonucleoprotein complexes. In terms of processing, phosphorylation regulates the subcellular localization. Phosphorylation of Ser-638 and Ser-640 in the RS (arginine/serine-rich) region promotes nuclear localization of the protein. In contrast, phosphorylation of the C-terminal disordered region promotes localization to cytoplasmic ribonucleoprotein granules.

The protein localises to the nucleus. The protein resides in the cytoplasm. It is found in the cytoplasmic ribonucleoprotein granule. Functionally, RNA-binding protein that acts as a regulator of mRNA splicing of a subset of genes encoding key structural proteins involved in cardiac development, such as TTN (Titin), CACNA1C, CAMK2D or PDLIM5/ENH. Acts as a repressor of mRNA splicing: specifically binds the 5'UCUU-3' motif that is predominantly found within intronic sequences of pre-mRNAs, leading to the exclusion of specific exons in target transcripts. RBM20-mediated exon skipping is hormone-dependent and is essential for TTN isoform transition in both cardiac and skeletal muscles. RBM20-mediated exon skipping of TTN provides substrates for the formation of circular RNA (circRNAs) from the TTN transcripts. Together with RBM24, promotes the expression of short isoforms of PDLIM5/ENH in cardiomyocytes. The chain is RNA-binding protein 20 from Rattus norvegicus (Rat).